A 238-amino-acid chain; its full sequence is 1-(5-phosphoribosyl)-5-[(5-phosphoribosylamino)methylideneamino] imidazole-4-carboxamide isomerase (238 aa).

The Proton acceptor role is filled by Asp-8. Residue Asp-129 is the Proton donor of the active site.

The protein belongs to the HisA/HisF family.

Its subcellular location is the cytoplasm. It catalyses the reaction 1-(5-phospho-beta-D-ribosyl)-5-[(5-phospho-beta-D-ribosylamino)methylideneamino]imidazole-4-carboxamide = 5-[(5-phospho-1-deoxy-D-ribulos-1-ylimino)methylamino]-1-(5-phospho-beta-D-ribosyl)imidazole-4-carboxamide. It participates in amino-acid biosynthesis; L-histidine biosynthesis; L-histidine from 5-phospho-alpha-D-ribose 1-diphosphate: step 4/9. The chain is 1-(5-phosphoribosyl)-5-[(5-phosphoribosylamino)methylideneamino] imidazole-4-carboxamide isomerase from Myxococcus xanthus (strain DK1622).